The primary structure comprises 324 residues: Glyoxylate/hydroxypyruvate reductase B (324 aa).

Catalysis depends on residues arginine 237 and glutamate 266. The active-site Proton donor is the histidine 285.

Belongs to the D-isomer specific 2-hydroxyacid dehydrogenase family. GhrB subfamily. Homodimer.

The protein localises to the cytoplasm. The enzyme catalyses glycolate + NADP(+) = glyoxylate + NADPH + H(+). It carries out the reaction (R)-glycerate + NAD(+) = 3-hydroxypyruvate + NADH + H(+). It catalyses the reaction (R)-glycerate + NADP(+) = 3-hydroxypyruvate + NADPH + H(+). In terms of biological role, catalyzes the NADPH-dependent reduction of glyoxylate and hydroxypyruvate into glycolate and glycerate, respectively. The sequence is that of Glyoxylate/hydroxypyruvate reductase B from Escherichia fergusonii (strain ATCC 35469 / DSM 13698 / CCUG 18766 / IAM 14443 / JCM 21226 / LMG 7866 / NBRC 102419 / NCTC 12128 / CDC 0568-73).